The following is a 781-amino-acid chain: DEAD-box ATP-dependent RNA helicase 50 (781 aa).

Disordered regions lie at residues 72-103 (EFAP…LTAS), 117-148 (GKVT…DEGF), 166-240 (IPRS…KGDR), 254-292 (GRAI…REDR), and 313-342 (YNPR…RGWG). Low complexity predominate over residues 79–88 (SDLLSSIPSE). The segment covering 130 to 143 (EEEDEDDASDENYS) has biased composition (acidic residues). The span at 171-197 (KSAERNEVKRASKVRESRESRRDLDRL) shows a compositional bias: basic and acidic residues. Residues 198-208 (EGDDEDVDEVS) show a composition bias toward acidic residues. Residues 216 to 226 (NQRAGSRSSYS) are compositionally biased toward polar residues. Positions 254-274 (GRAIDEVSNPRKFNDNERAES) are enriched in basic and acidic residues. Low complexity predominate over residues 275–286 (RSSYSRDSSANS). A compositionally biased stretch (basic and acidic residues) spans 313–325 (YNPRRFTDNERGL). Residues 374 to 402 (KTFAEIGCSEDMMKALKEQNFDRPAHIQA) carry the Q motif motif. The region spanning 405 to 586 (FSPVIDGKSC…VEVFPDCEVV (182 aa)) is the Helicase ATP-binding domain. Residue 418–425 (DQSGSGKT) coordinates ATP. A DEAD box motif is present at residues 533–536 (DEVD). The Helicase C-terminal domain occupies 621–781 (NKKTALLQIM…DVPNAYEFTT (161 aa)).

The protein belongs to the DEAD box helicase family.

The enzyme catalyses ATP + H2O = ADP + phosphate + H(+). Functionally, probably involved in resistance to biotic and abiotic stresses. This Arabidopsis thaliana (Mouse-ear cress) protein is DEAD-box ATP-dependent RNA helicase 50 (RH50).